We begin with the raw amino-acid sequence, 247 residues long: Probable dihydroorotate dehydrogenase B (NAD(+)), electron transfer subunit (247 aa).

Residues 1 to 87 (MLRRVMIKET…RGPYGNGFKS (87 aa)) enclose the FAD-binding FR-type domain. [2Fe-2S] cluster-binding residues include Cys200, Cys205, Cys208, and Cys216.

The protein belongs to the PyrK family. As to quaternary structure, heterotetramer of 2 PyrK and 2 PyrD type B subunits. It depends on [2Fe-2S] cluster as a cofactor. The cofactor is FAD.

It functions in the pathway pyrimidine metabolism; UMP biosynthesis via de novo pathway; orotate from (S)-dihydroorotate (NAD(+) route): step 1/1. Its function is as follows. Responsible for channeling the electrons from the oxidation of dihydroorotate from the FMN redox center in the PyrD type B subunit to the ultimate electron acceptor NAD(+). The sequence is that of Probable dihydroorotate dehydrogenase B (NAD(+)), electron transfer subunit from Pyrococcus abyssi (strain GE5 / Orsay).